The following is a 115-amino-acid chain: Nitrogen regulatory protein P-II 1 (115 aa).

Y54 bears the O-UMP-tyrosine mark.

Belongs to the P(II) protein family.

Its function is as follows. Could be involved in the regulation of nitrogen fixation. This is Nitrogen regulatory protein P-II 1 from Methanothermobacter thermautotrophicus (strain ATCC 29096 / DSM 1053 / JCM 10044 / NBRC 100330 / Delta H) (Methanobacterium thermoautotrophicum).